Here is a 612-residue protein sequence, read N- to C-terminus: Apoptosis-inducing factor 1, mitochondrial (612 aa).

2 consecutive short sequence motifs (mitochondrial localization signal) follow at residues 1–30 (MFRC…PKQR) and 62–88 (KMDN…KTIK). Residues 1 to 54 (MFRCGGLAGAFKQKLVPLVRTVYVQRPKQRNRLPGNLFQQWRVPLELQMARQMA) constitute a mitochondrion transit peptide. Residues 55–101 (SSGSSGGKMDNSVLVLIVGLSTIGAGAYAYKTIKEDQKRYNERVMGL) constitute a propeptide, removed in mature form. Lys108 carries the post-translational modification N6-succinyllysine. Position 115 is a phosphoserine (Ser115). Residues 133–482 (FLLIGGGTAA…KPYWHQSMFW (350 aa)) form an FAD-dependent oxidoreductase region. FAD is bound by residues 137 to 141 (GGGTA), 163 to 164 (ED), Arg171, and Lys176. Trp195 contacts NAD(+). Val232 contacts FAD. Residue Lys254 forms a Glycyl lysine isopeptide (Lys-Gly) (interchain with G-Cter in ubiquitin) linkage. At Ser267 the chain carries Phosphoserine. An FAD-binding site is contributed by Arg284. NAD(+) contacts are provided by residues 307–310 (GGFL), Glu335, and Lys341. At Ser370 the chain carries Phosphoserine. Lys387 is modified (N6-acetyllysine). Residue Gly398 coordinates NAD(+). Asp437 contributes to the FAD binding site. The short motif at 445-450 (KLGRRR) is the Nuclear localization signal element. NAD(+)-binding positions include 452 to 453 (EH), Trp482, and Glu492. FAD contacts are provided by residues 453–454 (HH) and Trp482. The span at 512–528 (AQDNPKSATEQSGTGIR) shows a compositional bias: polar residues. Residues 512–551 (AQDNPKSATEQSGTGIRSESETESEASEITIPPSAPAVPQ) form a disordered region. Thr520 bears the Phosphothreonine mark. Phosphoserine is present on residues Ser523 and Ser529. NAD(+) is bound at residue Asn582. At Lys592 the chain carries N6-acetyllysine.

It belongs to the FAD-dependent oxidoreductase family. In terms of assembly, monomer (oxidized form). Homodimer (reduced form). Upon reduction with NADH, undergoes dimerization and forms tight, long-lived FADH2-NAD charge transfer complexes (CTC) resistant to oxidation. Also dimerizes with isoform 3 preventing its release from mitochondria. Interacts with XIAP/BIRC4. Interacts (via N-terminus) with EIF3G (via C-terminus). Interacts with PRELID1. Interacts with CHCHD4; the interaction increases in presence of NADH. Interacts with processed form of PARP1 (Poly [ADP-ribose] polymerase 1, processed C-terminus); interaction is mediated with poly-ADP-ribose chains attached to PARP1, promoting translocation into the nucleus. FAD serves as cofactor. In terms of processing, under normal conditions, a 54-residue N-terminal segment is first proteolytically removed during or just after translocation into the mitochondrial intermembrane space (IMS) by the mitochondrial processing peptidase (MPP) to form the inner-membrane-anchored mature form (AIFmit). During apoptosis, it is further proteolytically processed at amino-acid position 101 leading to the generation of the mature form, which is confined to the mitochondrial IMS in a soluble form (AIFsol). AIFsol is released to the cytoplasm in response to specific death signals, and translocated to the nucleus, where it induces nuclear apoptosis in a caspase-independent manner. Post-translationally, ubiquitination by XIAP/BIRC4 does not lead to proteasomal degradation. Ubiquitination at Lys-254 by XIAP/BIRC4 blocks its ability to bind DNA and induce chromatin degradation, thereby inhibiting its ability to induce cell death. In terms of tissue distribution, expressed in cortical neurons (at protein level). Expressed in liver (at protein level).

It is found in the mitochondrion intermembrane space. Its subcellular location is the mitochondrion inner membrane. It localises to the cytoplasm. The protein resides in the nucleus. The protein localises to the perinuclear region. It is found in the mitochondrion. Its subcellular location is the cytosol. The catalysed reaction is A + NADH + H(+) = AH2 + NAD(+). Functionally, functions both as NADH oxidoreductase and as regulator of apoptosis. In response to apoptotic stimuli, it is released from the mitochondrion intermembrane space into the cytosol and to the nucleus, where it functions as a proapoptotic factor in a caspase-independent pathway. Release into the cytoplasm is mediated upon binding to poly-ADP-ribose chains. The soluble form (AIFsol) found in the nucleus induces 'parthanatos' i.e. caspase-independent fragmentation of chromosomal DNA. Binds to DNA in a sequence-independent manner. Interacts with EIF3G, and thereby inhibits the EIF3 machinery and protein synthesis, and activates caspase-7 to amplify apoptosis. Plays a critical role in caspase-independent, pyknotic cell death in hydrogen peroxide-exposed cells. In contrast, participates in normal mitochondrial metabolism. Plays an important role in the regulation of respiratory chain biogenesis by interacting with CHCHD4 and controlling CHCHD4 mitochondrial import. The sequence is that of Apoptosis-inducing factor 1, mitochondrial from Mus musculus (Mouse).